Here is a 216-residue protein sequence, read N- to C-terminus: 3-keto-L-gulonate-6-phosphate decarboxylase UlaD (216 aa).

Residue Asp11 participates in substrate binding. 2 residues coordinate Mg(2+): Glu33 and Asp62. Position 192 (Arg192) interacts with substrate.

This sequence belongs to the HPS/KGPDC family. KGPDC subfamily. As to quaternary structure, homodimer. Mg(2+) is required as a cofactor.

The catalysed reaction is 3-dehydro-L-gulonate 6-phosphate + H(+) = L-xylulose 5-phosphate + CO2. It participates in cofactor degradation; L-ascorbate degradation; D-xylulose 5-phosphate from L-ascorbate: step 2/4. Functionally, catalyzes the decarboxylation of 3-keto-L-gulonate-6-P into L-xylulose-5-P. Is involved in the anaerobic L-ascorbate utilization. This Salmonella typhi protein is 3-keto-L-gulonate-6-phosphate decarboxylase UlaD.